The primary structure comprises 554 residues: 7-epi-sesquithujene synthase (554 aa).

Residues Asp308 and Asp312 each contribute to the Mg(2+) site. The substrate site is built by Asp308, Asp312, Arg449, and Asn452. The DDXXD motif signature appears at 308-312 (DDMFD). Asn452, Ser456, and Glu460 together coordinate Mg(2+).

The protein belongs to the terpene synthase family. As to quaternary structure, monomer. It depends on Mg(2+) as a cofactor. Mn(2+) serves as cofactor. Highly expressed in the husk. Detected in leaf sheaths and leaves.

Its subcellular location is the cytoplasm. It catalyses the reaction (2E,6E)-farnesyl diphosphate = 7-epi-sesquithujene + diphosphate. The enzyme catalyses (2E,6E)-farnesyl diphosphate = (1S,5S,6R)-alpha-bergamotene + diphosphate. The catalysed reaction is (2E,6E)-farnesyl diphosphate = (E)-beta-farnesene + diphosphate. It carries out the reaction (2E,6E)-farnesyl diphosphate = (S)-beta-bisabolene + diphosphate. It catalyses the reaction (2Z,6E)-farnesyl diphosphate = (-)-beta-curcumene + diphosphate. The enzyme catalyses (2E,6E)-farnesyl diphosphate = gamma-curcumene + diphosphate. The catalysed reaction is (2E,6E)-farnesyl diphosphate = sesquisabinene A + diphosphate. The protein operates within secondary metabolite biosynthesis; terpenoid biosynthesis. Functionally, sesquiterpene synthase involved in the production after herbivore attack of a blend of volatiles that attracts natural enemies of herbivores. Converts farnesyl diphosphate to (S)-beta-bisabolene and 7-epi-sesquithujene, along with a mixture of more than 20 other minor sesquiterpene olefins. Can also act in vitro as a monoterpene synthase, converting geranyl diphosphate to (S)-(-)-limonene, beta-myrcene and 11 other monoterpenes. The sequence is that of 7-epi-sesquithujene synthase from Zea mays (Maize).